A 1154-amino-acid polypeptide reads, in one-letter code: FERM domain-containing protein A (1154 aa).

5 disordered regions span residues 122 to 149, 432 to 468, 715 to 734, 771 to 794, and 961 to 980; these read NNNS…SSSS, NLSS…NHHN, NKNN…SSSS, SNSN…TSSS, and TNGS…NNGI. 2 FERM domains span residues 218-547 and 666-1103; these read PLHQ…PSIQ and REIV…QTKL. Over residues 437–447 the composition is skewed to gly residues; it reads GGSGNGSGSGN. Residues 448 to 463 are compositionally biased toward low complexity; the sequence is GSSSSSSNSSSGNNNN.

Its function is as follows. Key regulator of adhesion dynamics, it acts as an anti-adhesive. Plays a critical role in the regulation of cell-cell adhesion, multi-cellular development and, in particular, the formation of the organising center known as the tip. Required for turnover of paxillin-adhesion sites during cell migration. Plays a major role in normal cell shape, cell-substrate adhesion and actin cytoskeleton organization. This is FERM domain-containing protein A (frmA) from Dictyostelium discoideum (Social amoeba).